We begin with the raw amino-acid sequence, 280 residues long: Orotidine 5'-phosphate decarboxylase (280 aa).

The active-site Proton donor is the lysine 96.

The protein belongs to the OMP decarboxylase family. Type 2 subfamily.

The catalysed reaction is orotidine 5'-phosphate + H(+) = UMP + CO2. The protein operates within pyrimidine metabolism; UMP biosynthesis via de novo pathway; UMP from orotate: step 2/2. This is Orotidine 5'-phosphate decarboxylase from Parabacteroides distasonis (strain ATCC 8503 / DSM 20701 / CIP 104284 / JCM 5825 / NCTC 11152).